A 459-amino-acid polypeptide reads, in one-letter code: UDP-N-acetylmuramoylalanine--D-glutamate ligase (459 aa).

Position 119–125 (119–125 (GTNGKTT)) interacts with ATP.

This sequence belongs to the MurCDEF family.

It is found in the cytoplasm. It carries out the reaction UDP-N-acetyl-alpha-D-muramoyl-L-alanine + D-glutamate + ATP = UDP-N-acetyl-alpha-D-muramoyl-L-alanyl-D-glutamate + ADP + phosphate + H(+). It participates in cell wall biogenesis; peptidoglycan biosynthesis. Its function is as follows. Cell wall formation. Catalyzes the addition of glutamate to the nucleotide precursor UDP-N-acetylmuramoyl-L-alanine (UMA). The protein is UDP-N-acetylmuramoylalanine--D-glutamate ligase of Lacticaseibacillus casei (strain BL23) (Lactobacillus casei).